A 316-amino-acid polypeptide reads, in one-letter code: Ribosomal RNA small subunit methyltransferase H (316 aa).

S-adenosyl-L-methionine is bound by residues 35-37, aspartate 55, phenylalanine 84, aspartate 105, and glutamine 112; that span reads AGH.

This sequence belongs to the methyltransferase superfamily. RsmH family.

It localises to the cytoplasm. It carries out the reaction cytidine(1402) in 16S rRNA + S-adenosyl-L-methionine = N(4)-methylcytidine(1402) in 16S rRNA + S-adenosyl-L-homocysteine + H(+). Its function is as follows. Specifically methylates the N4 position of cytidine in position 1402 (C1402) of 16S rRNA. The protein is Ribosomal RNA small subunit methyltransferase H of Streptococcus thermophilus (strain CNRZ 1066).